We begin with the raw amino-acid sequence, 335 residues long: Probable cytosolic iron-sulfur protein assembly protein Ciao1 (335 aa).

WD repeat units lie at residues 12-51 (GHKG…WTTK), 57-96 (GHKR…FECN), 101-140 (GHEN…EFEC), 146-185 (PHTQ…SDWD), 192-231 (SHTS…NDAG), 250-289 (QHSR…KRDE), and 301-335 (AHDQ…KMTE).

It belongs to the WD repeat CIA1 family.

Essential component of the cytosolic iron-sulfur (Fe/S) protein assembly machinery. Required for the maturation of extramitochondrial Fe/S proteins. In Drosophila ananassae (Fruit fly), this protein is Probable cytosolic iron-sulfur protein assembly protein Ciao1.